The primary structure comprises 361 residues: Phospho-N-acetylmuramoyl-pentapeptide-transferase (361 aa).

The next 10 membrane-spanning stretches (helical) occupy residues 27 to 47 (GALF…ISLL), 72 to 92 (TPTM…LLWA), 99 to 119 (VWIT…DDYL), 139 to 159 (ALIA…GLAY), 169 to 189 (AIVN…VGAG), 200 to 220 (GLAI…AYLV), 240 to 260 (LAVV…FNAP), 264 to 284 (IFMG…VAVA), 289 to 309 (IVLA…IIQV), and 338 to 358 (QVVI…LATL).

The protein belongs to the glycosyltransferase 4 family. MraY subfamily. The cofactor is Mg(2+).

Its subcellular location is the cell inner membrane. The catalysed reaction is UDP-N-acetyl-alpha-D-muramoyl-L-alanyl-gamma-D-glutamyl-meso-2,6-diaminopimeloyl-D-alanyl-D-alanine + di-trans,octa-cis-undecaprenyl phosphate = di-trans,octa-cis-undecaprenyl diphospho-N-acetyl-alpha-D-muramoyl-L-alanyl-D-glutamyl-meso-2,6-diaminopimeloyl-D-alanyl-D-alanine + UMP. Its pathway is cell wall biogenesis; peptidoglycan biosynthesis. Its function is as follows. Catalyzes the initial step of the lipid cycle reactions in the biosynthesis of the cell wall peptidoglycan: transfers peptidoglycan precursor phospho-MurNAc-pentapeptide from UDP-MurNAc-pentapeptide onto the lipid carrier undecaprenyl phosphate, yielding undecaprenyl-pyrophosphoryl-MurNAc-pentapeptide, known as lipid I. This chain is Phospho-N-acetylmuramoyl-pentapeptide-transferase, found in Methylobacterium nodulans (strain LMG 21967 / CNCM I-2342 / ORS 2060).